The sequence spans 643 residues: tRNA 5-methylaminomethyl-2-thiouridine biosynthesis bifunctional protein MnmC (643 aa).

Residues 1 to 223 (MPDRLVSATL…VDDRLVGDYA (223 aa)) are tRNA (mnm(5)s(2)U34)-methyltransferase. Residues 247–643 (IGAGLAGCAV…LRARRVGSAG (397 aa)) are FAD-dependent cmnm(5)s(2)U34 oxidoreductase.

The protein in the N-terminal section; belongs to the methyltransferase superfamily. tRNA (mnm(5)s(2)U34)-methyltransferase family. This sequence in the C-terminal section; belongs to the DAO family. It depends on FAD as a cofactor.

It localises to the cytoplasm. The catalysed reaction is 5-aminomethyl-2-thiouridine(34) in tRNA + S-adenosyl-L-methionine = 5-methylaminomethyl-2-thiouridine(34) in tRNA + S-adenosyl-L-homocysteine + H(+). In terms of biological role, catalyzes the last two steps in the biosynthesis of 5-methylaminomethyl-2-thiouridine (mnm(5)s(2)U) at the wobble position (U34) in tRNA. Catalyzes the FAD-dependent demodification of cmnm(5)s(2)U34 to nm(5)s(2)U34, followed by the transfer of a methyl group from S-adenosyl-L-methionine to nm(5)s(2)U34, to form mnm(5)s(2)U34. The sequence is that of tRNA 5-methylaminomethyl-2-thiouridine biosynthesis bifunctional protein MnmC from Burkholderia orbicola (strain AU 1054).